The sequence spans 300 residues: Urease accessory protein UreD (300 aa).

Belongs to the UreD family. In terms of assembly, ureD, UreF and UreG form a complex that acts as a GTP-hydrolysis-dependent molecular chaperone, activating the urease apoprotein by helping to assemble the nickel containing metallocenter of UreC. The UreE protein probably delivers the nickel.

It localises to the cytoplasm. Required for maturation of urease via the functional incorporation of the urease nickel metallocenter. The chain is Urease accessory protein UreD from Prochlorococcus marinus (strain AS9601).